A 578-amino-acid chain; its full sequence is 2-succinyl-5-enolpyruvyl-6-hydroxy-3-cyclohexene-1-carboxylate synthase (578 aa).

The tract at residues 186–208 is disordered; it reads LPAAGGEHHPAEPRSTPWDGPVP.

This sequence belongs to the TPP enzyme family. MenD subfamily. Homodimer. Mg(2+) serves as cofactor. The cofactor is Mn(2+). Thiamine diphosphate is required as a cofactor.

It carries out the reaction isochorismate + 2-oxoglutarate + H(+) = 5-enolpyruvoyl-6-hydroxy-2-succinyl-cyclohex-3-ene-1-carboxylate + CO2. The protein operates within quinol/quinone metabolism; 1,4-dihydroxy-2-naphthoate biosynthesis; 1,4-dihydroxy-2-naphthoate from chorismate: step 2/7. Its pathway is cofactor biosynthesis; phylloquinone biosynthesis. Its function is as follows. Catalyzes the thiamine diphosphate-dependent decarboxylation of 2-oxoglutarate and the subsequent addition of the resulting succinic semialdehyde-thiamine pyrophosphate anion to isochorismate to yield 2-succinyl-5-enolpyruvyl-6-hydroxy-3-cyclohexene-1-carboxylate (SEPHCHC). In Synechococcus sp. (strain WH7803), this protein is 2-succinyl-5-enolpyruvyl-6-hydroxy-3-cyclohexene-1-carboxylate synthase.